The following is a 540-amino-acid chain: Alanine aminotransferase 2 (540 aa).

Lys358 is subject to N6-(pyridoxal phosphate)lysine.

This sequence belongs to the class-I pyridoxal-phosphate-dependent aminotransferase family. Alanine aminotransferase subfamily. As to quaternary structure, homodimer. The cofactor is pyridoxal 5'-phosphate.

The enzyme catalyses L-alanine + 2-oxoglutarate = pyruvate + L-glutamate. It functions in the pathway amino-acid degradation; L-alanine degradation via transaminase pathway; pyruvate from L-alanine: step 1/1. Catalyzes the reversible transamination between alanine and 2-oxoglutarate to form pyruvate and glutamate. This Xenopus laevis (African clawed frog) protein is Alanine aminotransferase 2 (gpt2).